A 168-amino-acid chain; its full sequence is D-aminoacyl-tRNA deacylase 2 (168 aa).

A Gly-transPro motif, allows the protein to recognize chirality of D-amino acids motif is present at residues 160–161; that stretch reads GP.

Belongs to the DTD family. In terms of assembly, homodimer.

It is found in the cytoplasm. The catalysed reaction is a D-aminoacyl-tRNA + H2O = a tRNA + a D-alpha-amino acid + H(+). The enzyme catalyses glycyl-tRNA(Ala) + H2O = tRNA(Ala) + glycine + H(+). It catalyses the reaction D-tyrosyl-tRNA(Tyr) + H2O = D-tyrosine + tRNA(Tyr). It carries out the reaction L-alanyl-tRNA(Thr) + H2O = tRNA(Thr) + L-alanine + H(+). Functionally, deacylates mischarged D-aminoacyl-tRNAs. Also deacylates mischarged glycyl-tRNA(Ala), protecting cells against glycine mischarging by AlaRS. Probably acts by rejecting L-amino acids from its binding site rather than specific recognition of D-amino acids. Catalyzes the hydrolysis of D-tyrosyl-tRNA(Tyr), has no activity on correctly charged L-tyrosyl-tRNA(Tyr). By recycling D-aminoacyl-tRNA to D-amino acids and free tRNA molecules, this enzyme counteracts the toxicity associated with the formation of D-aminoacyl-tRNA entities in vivo and helps enforce protein L-homochirality. In contrast to DTD1, deacylates L-Ala mischarged on tRNA(Thr)(G4.U69) by alanine-tRNA ligase AARS. Can deacylate L-Ala due to a relaxed specificity for substrate chirality caused by the trans conformation of the Gly-Pro motif in the active site. Also hydrolyzes correctly charged, achiral, glycyl-tRNA(Gly) in vitro, although in vivo EEF1A1/EF-Tu may protect cognate achiral glycyl-tRNA(Gly) from DTD2-mediated deacetylation. This Homo sapiens (Human) protein is D-aminoacyl-tRNA deacylase 2 (DTD2).